The chain runs to 248 residues: Triosephosphate isomerase (248 aa).

Positions 11 and 13 each coordinate substrate. Catalysis depends on H95, which acts as the Electrophile. E165 functions as the Proton acceptor in the catalytic mechanism.

This sequence belongs to the triosephosphate isomerase family. As to quaternary structure, homodimer.

The protein resides in the cytoplasm. It catalyses the reaction dihydroxyacetone phosphate = methylglyoxal + phosphate. The enzyme catalyses D-glyceraldehyde 3-phosphate = dihydroxyacetone phosphate. The protein operates within carbohydrate degradation; glycolysis; D-glyceraldehyde 3-phosphate from glycerone phosphate: step 1/1. It participates in carbohydrate biosynthesis; gluconeogenesis. Its function is as follows. Triosephosphate isomerase is an extremely efficient metabolic enzyme that catalyzes the interconversion between dihydroxyacetone phosphate (DHAP) and D-glyceraldehyde-3-phosphate (G3P) in glycolysis and gluconeogenesis. In terms of biological role, it is also responsible for the non-negligible production of methylglyoxal a reactive cytotoxic side-product that modifies and can alter proteins, DNA and lipids. This Xenopus tropicalis (Western clawed frog) protein is Triosephosphate isomerase (tpi1).